A 136-amino-acid chain; its full sequence is UPF0102 protein BBta_0181 (136 aa).

This sequence belongs to the UPF0102 family.

This Bradyrhizobium sp. (strain BTAi1 / ATCC BAA-1182) protein is UPF0102 protein BBta_0181.